The chain runs to 549 residues: MNASCFLSALTFVLLIGKSIAWYYNASSELMTYDEASAYCQRDYTHLVAIQNKEEINYLNSTLRYSPSYYWIGIRKVNNVWIWVGTQKPLTEEAKNWAPGEPNNKQRNEDCVEIYIQRPKDSGMWNDERCDKKKLALCYTASCTNTSCSGHGECVETINSYTCKCHPGFLGPKCDQVVTCQEQEYPDHGSLNCTHPFGLFSYNSSCSFSCERGYVPSSMETTVRCTSSGEWSAPAPACHVVECKALTQPAHGVRKCSSNPGSYPWNTTCTFDCEEGYRRVGAQNLQCTSSGVWDNEKPSCKAVTCDAIPRPQNGSVSCSNSTAGALAFKSSCNFTCEHSFTLQGPAQVECSAQGQWTPQIPVCKASQCEALSAPQRGHMKCLPSASAPFQSGSSCKFSCDEGFELKGSRRLQCGPRGEWDSEKPTCAGVQCSSLDLPGKMNMSCSGPAVFGTVCEFTCPEGWTLNGSSILTCGATGRWSAMLPTCEAPANPPRPLVVALSVAATSLLTLSSLIYVLKRFFWKKAKKFVPASSCQSLQSFENYQGPSYII.

A signal peptide spans 1–21; that stretch reads MNASCFLSALTFVLLIGKSIA. Residues 22-139 enclose the C-type lectin domain; sequence WYYNASSELM…CDKKKLALCY (118 aa). The Extracellular segment spans residues 22–494; that stretch reads WYYNASSELM…CEAPANPPRP (473 aa). N-linked (GlcNAc...) asparagine glycosylation is found at asparagine 25 and asparagine 60. Cystine bridges form between cysteine 40/cysteine 138, cysteine 111/cysteine 130, cysteine 143/cysteine 154, cysteine 148/cysteine 163, cysteine 165/cysteine 174, cysteine 180/cysteine 225, cysteine 193/cysteine 206, cysteine 210/cysteine 238, cysteine 243/cysteine 287, cysteine 256/cysteine 269, cysteine 273/cysteine 300, cysteine 305/cysteine 350, cysteine 336/cysteine 363, cysteine 368/cysteine 413, cysteine 399/cysteine 426, cysteine 431/cysteine 472, and cysteine 458/cysteine 485. Ca(2+) is bound by residues glutamate 101, asparagine 103, and glutamate 109. A carbohydrate-binding positions include 101 to 109, 113 to 118, and 126 to 128; these read EPNNKQRNE, EIYIQR, and NDE. Positions 126 and 127 each coordinate Ca(2+). One can recognise an EGF-like domain in the interval 140–175; it reads TASCTNTSCSGHGECVETINSYTCKCHPGFLGPKCD. Asparagine 145 carries an N-linked (GlcNAc...) asparagine glycan. Sushi domains are found at residues 178–240, 241–302, 303–365, 366–428, and 429–487; these read VTCQ…ACHV, VECK…SCKA, VTCD…VCKA, SQCE…TCAG, and VQCS…TCEA. Residues asparagine 192 and asparagine 203 are each glycosylated (N-linked (GlcNAc...) asparagine). Asparagine 266 carries an N-linked (GlcNAc...) asparagine glycan. N-linked (GlcNAc...) asparagine glycans are attached at residues asparagine 313, asparagine 320, and asparagine 333. Residues asparagine 441 and asparagine 465 are each glycosylated (N-linked (GlcNAc...) asparagine). The helical transmembrane segment at 495–516 threads the bilayer; sequence LVVALSVAATSLLTLSSLIYVL. Over 517–549 the chain is Cytoplasmic; that stretch reads KRFFWKKAKKFVPASSCQSLQSFENYQGPSYII.

Belongs to the selectin/LECAM family. As to quaternary structure, interacts with SELPLG/PSGL1 and PODXL2 through the sialyl Lewis X epitope. SELPLG sulfation appears not to be required for this interaction.

It localises to the cell membrane. In terms of biological role, cell-surface glycoprotein having a role in immunoadhesion. Mediates in the adhesion of blood neutrophils in cytokine-activated endothelium through interaction with SELPLG/PSGL1. May have a role in capillary morphogenesis. The sequence is that of E-selectin (Sele) from Rattus norvegicus (Rat).